The following is a 338-amino-acid chain: Phenylalanine--tRNA ligase alpha subunit (338 aa).

Residue Glu253 coordinates Mg(2+).

Belongs to the class-II aminoacyl-tRNA synthetase family. Phe-tRNA synthetase alpha subunit type 1 subfamily. In terms of assembly, tetramer of two alpha and two beta subunits. It depends on Mg(2+) as a cofactor.

Its subcellular location is the cytoplasm. The enzyme catalyses tRNA(Phe) + L-phenylalanine + ATP = L-phenylalanyl-tRNA(Phe) + AMP + diphosphate + H(+). The polypeptide is Phenylalanine--tRNA ligase alpha subunit (Geobacter sp. (strain M21)).